The primary structure comprises 453 residues: uncharacterized protein (453 aa).

The TRAM domain maps to 5-63 (LLKKNQSVELTIEDLTHDGSGVGKIDGYPLFIPNALPGEKITAKITKLNKNYGFARMEN). C76, C82, C85, and C162 together coordinate [4Fe-4S] cluster. Residues Q285, Y314, E335, and D383 each contribute to the S-adenosyl-L-methionine site. The active-site Nucleophile is the C410.

This sequence belongs to the class I-like SAM-binding methyltransferase superfamily. RNA M5U methyltransferase family.

This is an uncharacterized protein from Listeria innocua serovar 6a (strain ATCC BAA-680 / CLIP 11262).